The following is a 736-amino-acid chain: NADPH--cytochrome P450 reductase (736 aa).

Met1 is a topological domain (lumenal). The chain crosses the membrane as a helical span at residues 2–24; sequence AVSSSSDVIVLSVGIILAALYLF. Topologically, residues 25-736 are cytoplasmic; sequence REQIFSAAKP…RNRLLLDVWS (712 aa). The region spanning 66–216 is the Flavodoxin-like domain; that stretch reads IVIFYGSQTG…DYLEWKDGMW (151 aa). Residues 72 to 77, 123 to 126, 165 to 174, and Asp200 contribute to the FMN site; these read SQTGTA, ATYG, and LGNKTYEHYN. Positions 269–546 constitute an FAD-binding FR-type domain; the sequence is KNPYPAPIIA…EGPRGAYKQG (278 aa). Residue Arg289 coordinates NADP(+). FAD-binding positions include 456–459, 474–476, Tyr480, and 495–498; these read RYYS, TVV, and GVGS. NADP(+) is bound by residues Thr577, 648 to 649, and 659 to 663; these read SR and KIYVQ. Trp735 serves as a coordination point for FAD.

Belongs to the NADPH--cytochrome P450 reductase family. This sequence in the N-terminal section; belongs to the flavodoxin family. It in the C-terminal section; belongs to the flavoprotein pyridine nucleotide cytochrome reductase family. FAD is required as a cofactor. FMN serves as cofactor.

The protein resides in the endoplasmic reticulum membrane. The protein localises to the mitochondrion outer membrane. Its subcellular location is the cell membrane. It carries out the reaction 2 oxidized [cytochrome P450] + NADPH = 2 reduced [cytochrome P450] + NADP(+) + H(+). Functionally, this enzyme is required for electron transfer from NADP to cytochrome P450 in microsomes. It can also provide electron transfer to heme oxygenase and cytochrome B5. Involved in ergosterol biosynthesis. The sequence is that of NADPH--cytochrome P450 reductase (CPR) from Phanerodontia chrysosporium (White-rot fungus).